We begin with the raw amino-acid sequence, 90 residues long: DNA-binding protein HU (90 aa).

Belongs to the bacterial histone-like protein family. As to quaternary structure, homodimer.

Its function is as follows. Histone-like DNA-binding protein which is capable of wrapping DNA to stabilize it, and thus to prevent its denaturation under extreme environmental conditions. In Pasteurella multocida (strain Pm70), this protein is DNA-binding protein HU (hup).